The primary structure comprises 928 residues: Protein NETWORKED 2B (928 aa).

One can recognise an NAB domain in the interval 10 to 90 (YSWWWASHIR…ERYDHLSTEL (81 aa)). A disordered region spans residues 108–144 (PLVDDDDDDDDDNPKKPPKHLHLIPSGTNIPQVPEVP). Over residues 110-119 (VDDDDDDDDD) the composition is skewed to acidic residues. Coiled-coil stretches lie at residues 207 to 309 (SYEQ…AKKA) and 360 to 445 (ALLK…VKMD). Disordered regions lie at residues 447–472 (DVEG…SISN) and 489–529 (KQSR…EERR). The segment covering 457 to 468 (DIQEEDTVEDSD) has biased composition (acidic residues). Over residues 489 to 506 (KQSRDQESMQEEKSETRD) the composition is skewed to basic and acidic residues. Residues 547 to 574 (LLDEYSSVLRDYREVKRKLSEVEKKNRD) are a coiled coil. A disordered region spans residues 620-651 (AESVSISHSSNSSFSMPPLPQRGDLKRASEQE). Residues 622–634 (SVSISHSSNSSFS) are compositionally biased toward low complexity. Over residues 642-651 (GDLKRASEQE) the composition is skewed to basic and acidic residues.

Belongs to the NET family.

Plant-specific actin binding protein. May be part of a membrane-cytoskeletal adapter complex. The polypeptide is Protein NETWORKED 2B (Arabidopsis thaliana (Mouse-ear cress)).